A 247-amino-acid chain; its full sequence is LHFPL tetraspan subfamily member 4 protein (247 aa).

4 helical membrane passes run 22 to 42 (IGVL…VVFI), 97 to 117 (FFVL…ALFF), 127 to 147 (ICAW…MIFP), and 178 to 198 (ILAI…FVLG).

This sequence belongs to the LHFP family. In terms of assembly, interacts with GABA(A) receptor subunits. Interacts with GABRB3. Interacts with GABRA2. Interacts with GABRG2. Interacts with GABRA1. Identified in a complex of 720 kDa composed of LHFPL4, NLGN2, GABRA1, GABRB2, GABRG2 and GABRB3. Interacts with NLGN2; leading to mutual regulation of protein level and synaptic clustering. In terms of tissue distribution, highly expressed in the brain, including the cortex, hippocampus, midbrain, olfactory bulb pona plus medulla (at protein level). Expressed in the in the cerebellar granular layer and in granular layer. Colocalized with GPHN at inhibitory synapses. Weakly expressed in heart, testis, lung, intestine, vagina, ovary and uterus.

Its subcellular location is the cell projection. It is found in the dendrite. The protein localises to the postsynaptic cell membrane. Functionally, plays a role in the regulation of inhibitory synapse formation and function by being involved in maintening gamma-aminobutyric acid receptors (GABAARs) clustering and their associated scaffold proteins at inhibitory synaptic sites. Acts in concert with NLGN2 to recruit or stabilize GABAARs. This is LHFPL tetraspan subfamily member 4 protein from Mus musculus (Mouse).